The following is a 256-amino-acid chain: Triosephosphate isomerase (256 aa).

Position 10 to 12 (10 to 12 (NWK)) interacts with substrate. His97 (electrophile) is an active-site residue. The active-site Proton acceptor is the Glu169. Residues Gly175, Ser214, and 235–236 (GG) contribute to the substrate site.

This sequence belongs to the triosephosphate isomerase family. In terms of assembly, homodimer.

It is found in the cytoplasm. The enzyme catalyses D-glyceraldehyde 3-phosphate = dihydroxyacetone phosphate. It participates in carbohydrate biosynthesis; gluconeogenesis. The protein operates within carbohydrate degradation; glycolysis; D-glyceraldehyde 3-phosphate from glycerone phosphate: step 1/1. Its function is as follows. Involved in the gluconeogenesis. Catalyzes stereospecifically the conversion of dihydroxyacetone phosphate (DHAP) to D-glyceraldehyde-3-phosphate (G3P). The protein is Triosephosphate isomerase of Haemophilus ducreyi (strain 35000HP / ATCC 700724).